The chain runs to 229 residues: 2,3-bisphosphoglycerate-dependent phosphoglycerate mutase (229 aa).

Residues 7–14, 20–21, Arg59, 86–89, Lys97, 113–114, and 182–183 each bind substrate; these read RHGQSEWN, TG, ERHY, RR, and GN. His8 serves as the catalytic Tele-phosphohistidine intermediate. Glu86 (proton donor/acceptor) is an active-site residue.

This sequence belongs to the phosphoglycerate mutase family. BPG-dependent PGAM subfamily.

It catalyses the reaction (2R)-2-phosphoglycerate = (2R)-3-phosphoglycerate. The protein operates within carbohydrate degradation; glycolysis; pyruvate from D-glyceraldehyde 3-phosphate: step 3/5. Functionally, catalyzes the interconversion of 2-phosphoglycerate and 3-phosphoglycerate. The chain is 2,3-bisphosphoglycerate-dependent phosphoglycerate mutase from Listeria monocytogenes serotype 4a (strain HCC23).